A 74-amino-acid chain; its full sequence is Cytochrome b559 subunit alpha (74 aa).

Residues 22-36 form a helical membrane-spanning segment; that stretch reads VIHTVTIPSLFVAGW. A heme-binding site is contributed by histidine 24.

This sequence belongs to the PsbE/PsbF family. Heterodimer of an alpha subunit and a beta subunit. PSII is composed of 1 copy each of membrane proteins PsbA, PsbB, PsbC, PsbD, PsbE, PsbF, PsbH, PsbI, PsbJ, PsbK, PsbL, PsbM, PsbT, PsbX, PsbY, PsbZ, Psb30/Ycf12, at least 3 peripheral proteins of the oxygen-evolving complex and a large number of cofactors. It forms dimeric complexes. The cofactor is heme b.

The protein resides in the plastid. Its subcellular location is the cyanelle thylakoid membrane. In terms of biological role, this b-type cytochrome is tightly associated with the reaction center of photosystem II (PSII). PSII is a light-driven water:plastoquinone oxidoreductase that uses light energy to abstract electrons from H(2)O, generating O(2) and a proton gradient subsequently used for ATP formation. It consists of a core antenna complex that captures photons, and an electron transfer chain that converts photonic excitation into a charge separation. The chain is Cytochrome b559 subunit alpha from Cyanophora paradoxa.